The sequence spans 119 residues: Large ribosomal subunit protein bL20 (119 aa).

It belongs to the bacterial ribosomal protein bL20 family.

In terms of biological role, binds directly to 23S ribosomal RNA and is necessary for the in vitro assembly process of the 50S ribosomal subunit. It is not involved in the protein synthesizing functions of that subunit. The sequence is that of Large ribosomal subunit protein bL20 from Legionella pneumophila (strain Paris).